A 469-amino-acid chain; its full sequence is Citrate synthase, mitochondrial (469 aa).

The transit peptide at 1-33 (MAPVMRLGSAALRSSIHLTSRQTAFTAARCYSS) directs the protein to the mitochondrion. H352 is a catalytic residue.

This sequence belongs to the citrate synthase family.

Its subcellular location is the mitochondrion matrix. The enzyme catalyses oxaloacetate + acetyl-CoA + H2O = citrate + CoA + H(+). It participates in carbohydrate metabolism; tricarboxylic acid cycle; isocitrate from oxaloacetate: step 1/2. The chain is Citrate synthase, mitochondrial (cit-1) from Neurospora crassa (strain ATCC 24698 / 74-OR23-1A / CBS 708.71 / DSM 1257 / FGSC 987).